The sequence spans 350 residues: Protein RecA (350 aa).

Position 67–74 (67–74 (GPESSGKT)) interacts with ATP.

It belongs to the RecA family.

Its subcellular location is the cytoplasm. Can catalyze the hydrolysis of ATP in the presence of single-stranded DNA, the ATP-dependent uptake of single-stranded DNA by duplex DNA, and the ATP-dependent hybridization of homologous single-stranded DNAs. It interacts with LexA causing its activation and leading to its autocatalytic cleavage. The protein is Protein RecA of Chlamydia caviae (strain ATCC VR-813 / DSM 19441 / 03DC25 / GPIC) (Chlamydophila caviae).